The chain runs to 1168 residues: Carbamoyl phosphate synthase arginine-specific large chain, mitochondrial (1168 aa).

Residues 1–51 constitute a mitochondrion transit peptide; that stretch reads MLSTVHKAGRAPALLRHGRRVPVQASQLRALTSGAQNTSIFQTQANAAQRL. Positions 86–483 are carboxyphosphate synthetic domain; that stretch reads RDHVDVKKVL…SFQKAIRQVD (398 aa). ATP contacts are provided by residues arginine 213, 243–298, arginine 253, glycine 259, glycine 260, lysine 290, leucine 292, glutamate 297, glycine 323, isoleucine 324, histidine 325, glutamine 366, and glutamate 380; that span reads ANKI…WKEV. Positions 217–409 constitute an ATP-grasp 1 domain; it reads AKALEEINIP…LAYTAAKIGL (193 aa). 3 residues coordinate Mg(2+): glutamine 366, glutamate 380, and asparagine 382. Mn(2+) contacts are provided by glutamine 366, glutamate 380, and asparagine 382. An oligomerization domain region spans residues 484-628; sequence PRFVGFQGDK…YTTYNASSHD (145 aa). Residues 629-1017 form a carbamoyl phosphate synthetic domain region; that stretch reads VTFEDKGTVI…AYWASLQSAM (389 aa). In terms of domain architecture, ATP-grasp 2 spans 754–951; it reads SEILDSIGVD…FIDAATKALV (198 aa). ATP is bound by residues 780–837, arginine 790, lysine 829, isoleucine 831, glutamate 836, glycine 861, valine 862, histidine 863, serine 864, glutamine 904, and glutamate 922; that span reads AEEV…AQEI. Glutamine 904, glutamate 922, and asparagine 924 together coordinate Mg(2+). The Mn(2+) site is built by glutamine 904, glutamate 922, and asparagine 924. The allosteric domain stretch occupies residues 1018–1152; that stretch reads NFRVPEPGEG…AEKLPRPEGI (135 aa). The 150-residue stretch at 1019-1168 folds into the MGS-like domain; that stretch reads FRVPEPGEGL…WSEFIGGKPL (150 aa).

It belongs to the CarB family. As to quaternary structure, heterodimer composed of 2 chains; the small (or glutamine) chain promotes the hydrolysis of glutamine to ammonia, which is used by the large (or ammonia) chain to synthesize carbamoyl phosphate. Requires Mg(2+) as cofactor. Mn(2+) serves as cofactor.

Its subcellular location is the mitochondrion matrix. The enzyme catalyses hydrogencarbonate + L-glutamine + 2 ATP + H2O = carbamoyl phosphate + L-glutamate + 2 ADP + phosphate + 2 H(+). It catalyses the reaction hydrogencarbonate + NH4(+) + 2 ATP = carbamoyl phosphate + 2 ADP + phosphate + 2 H(+). The protein operates within amino-acid biosynthesis; L-arginine biosynthesis; carbamoyl phosphate from bicarbonate: step 1/1. Large subunit of the arginine-specific carbamoyl phosphate synthase (CPSase). CPSase catalyzes the formation of carbamoyl phosphate from the ammonia moiety of glutamine, hydrogencarbonate, and phosphate donated by ATP, the first step of the arginine biosynthetic pathway. The large subunit (synthetase) binds the substrates ammonia (free or transferred from glutamine from the small subunit), hydrogencarbonate and ATP and carries out an ATP-coupled ligase reaction, activating hydrogencarbonate by forming carboxy phosphate which reacts with ammonia to form carbamoyl phosphate. This Neurospora crassa (strain ATCC 24698 / 74-OR23-1A / CBS 708.71 / DSM 1257 / FGSC 987) protein is Carbamoyl phosphate synthase arginine-specific large chain, mitochondrial (arg-3).